The chain runs to 246 residues: Proteasome subunit alpha type-6-A (246 aa).

Belongs to the peptidase T1A family. As to quaternary structure, component of the 20S core complex of the 26S proteasome. The 26S proteasome is composed of a core protease (CP), known as the 20S proteasome, capped at one or both ends by the 19S regulatory particle (RP/PA700). The 20S proteasome core is composed of 28 subunits that are arranged in four stacked rings, resulting in a barrel-shaped structure. The two end rings are each formed by seven alpha subunits, and the two central rings are each formed by seven beta subunits. The catalytic chamber with the active sites is on the inside of the barrel. As to expression, ubiquitous low levels, higher expression in siliques and flowers.

The protein resides in the cytoplasm. Its subcellular location is the nucleus. Functionally, the proteasome is a multicatalytic proteinase complex which is characterized by its ability to cleave peptides with Arg, Phe, Tyr, Leu, and Glu adjacent to the leaving group at neutral or slightly basic pH. The proteasome has an ATP-dependent proteolytic activity. The polypeptide is Proteasome subunit alpha type-6-A (PAA1) (Arabidopsis thaliana (Mouse-ear cress)).